We begin with the raw amino-acid sequence, 479 residues long: Ribosomal RNA small subunit methyltransferase F (479 aa).

Residues 125-131 (AAAPGSK), Glu-149, Asp-176, and Asp-194 each bind S-adenosyl-L-methionine. Cys-247 functions as the Nucleophile in the catalytic mechanism.

Belongs to the class I-like SAM-binding methyltransferase superfamily. RsmB/NOP family.

It localises to the cytoplasm. It catalyses the reaction cytidine(1407) in 16S rRNA + S-adenosyl-L-methionine = 5-methylcytidine(1407) in 16S rRNA + S-adenosyl-L-homocysteine + H(+). Specifically methylates the cytosine at position 1407 (m5C1407) of 16S rRNA. This is Ribosomal RNA small subunit methyltransferase F from Salmonella agona (strain SL483).